Reading from the N-terminus, the 446-residue chain is Phosphoglucosamine mutase (446 aa).

The active-site Phosphoserine intermediate is the Ser102. Residues Ser102, Asp241, Asp243, and Asp245 each coordinate Mg(2+). Ser102 is subject to Phosphoserine.

The protein belongs to the phosphohexose mutase family. Mg(2+) serves as cofactor. Activated by phosphorylation.

It carries out the reaction alpha-D-glucosamine 1-phosphate = D-glucosamine 6-phosphate. In terms of biological role, catalyzes the conversion of glucosamine-6-phosphate to glucosamine-1-phosphate. The chain is Phosphoglucosamine mutase from Xylella fastidiosa (strain M12).